Consider the following 582-residue polypeptide: Hemagglutinin-neuraminidase (582 aa).

Residues 1 to 34 (MEPSKLFTMSDNATFAPGPVINAADKKTFRTCFR) are Intravirion-facing. A helical; Signal-anchor for type II membrane protein transmembrane segment spans residues 35–55 (ILVLSVQAVTLILVIVTLGEL). The Virion surface portion of the chain corresponds to 56–582 (VRMINDQGLS…LPVLTRLTIT (527 aa)). The N-linked (GlcNAc...) asparagine; by host glycan is linked to Asn-127. Intrachain disulfides connect Cys-178/Cys-202, Cys-192/Cys-253, and Cys-244/Cys-257. The segment at 240–245 (NRKSCS) is involved in neuraminidase activity. N-linked (GlcNAc...) asparagine; by host glycosylation is found at Asn-284 and Asn-329. Cystine bridges form between Cys-350–Cys-471, Cys-382–Cys-392, and Cys-465–Cys-475. Residues Asn-400, Asn-448, and Asn-464 are each glycosylated (N-linked (GlcNAc...) asparagine; by host). The N-linked (GlcNAc...) asparagine; by host glycan is linked to Asn-507. Cys-545 and Cys-556 are oxidised to a cystine.

Belongs to the paramyxoviruses hemagglutinin-neuraminidase family. In terms of assembly, homotetramer; composed of disulfide-linked homodimers. Interacts with F protein trimer.

Its subcellular location is the virion membrane. It localises to the host cell membrane. It catalyses the reaction Hydrolysis of alpha-(2-&gt;3)-, alpha-(2-&gt;6)-, alpha-(2-&gt;8)- glycosidic linkages of terminal sialic acid residues in oligosaccharides, glycoproteins, glycolipids, colominic acid and synthetic substrates.. Its function is as follows. Attaches the virus to alpha-2,3-linked sialic acid-containing cell receptors and thereby initiating infection. Binding of HN protein to the receptor induces a conformational change that allows the F protein to trigger virion/cell membranes fusion. Binds to the glycan motifs sialyl Lewis (SLe) and GM2 ganglioside (GM2-glycan). In terms of biological role, neuraminidase (sialidase) activity ensures the efficient spread of the virus by dissociating the mature virions from the neuraminic acid containing glycoproteins. The protein is Hemagglutinin-neuraminidase (HN) of Mumps virus genotype B (strain Miyahara vaccine) (MuV).